Consider the following 452-residue polypeptide: UDP-N-acetylmuramoylalanine--D-glutamate ligase (452 aa).

119–125 (GSNGKTT) provides a ligand contact to ATP.

The protein belongs to the MurCDEF family.

It localises to the cytoplasm. It carries out the reaction UDP-N-acetyl-alpha-D-muramoyl-L-alanine + D-glutamate + ATP = UDP-N-acetyl-alpha-D-muramoyl-L-alanyl-D-glutamate + ADP + phosphate + H(+). It participates in cell wall biogenesis; peptidoglycan biosynthesis. In terms of biological role, cell wall formation. Catalyzes the addition of glutamate to the nucleotide precursor UDP-N-acetylmuramoyl-L-alanine (UMA). This Streptococcus pyogenes serotype M5 (strain Manfredo) protein is UDP-N-acetylmuramoylalanine--D-glutamate ligase.